The chain runs to 474 residues: UDP-N-acetylmuramate--L-alanine ligase (474 aa).

119–125 (GTHGKTT) serves as a coordination point for ATP.

It belongs to the MurCDEF family.

Its subcellular location is the cytoplasm. It carries out the reaction UDP-N-acetyl-alpha-D-muramate + L-alanine + ATP = UDP-N-acetyl-alpha-D-muramoyl-L-alanine + ADP + phosphate + H(+). Its pathway is cell wall biogenesis; peptidoglycan biosynthesis. Cell wall formation. This Jannaschia sp. (strain CCS1) protein is UDP-N-acetylmuramate--L-alanine ligase.